Consider the following 493-residue polypeptide: Cysteine sulfinic acid decarboxylase (493 aa).

N6-(pyridoxal phosphate)lysine is present on K305.

This sequence belongs to the group II decarboxylase family. As to quaternary structure, homodimer. It depends on pyridoxal 5'-phosphate as a cofactor. Expressed in liver and brain. Also expressed in both astrocytes and neurons, but lower levels are expressed in astrocytes.

The enzyme catalyses L-aspartate + H(+) = beta-alanine + CO2. It catalyses the reaction 3-sulfino-L-alanine + H(+) = hypotaurine + CO2. It carries out the reaction L-cysteate + H(+) = taurine + CO2. It participates in organosulfur biosynthesis; taurine biosynthesis; hypotaurine from L-cysteine: step 2/2. Catalyzes the decarboxylation of L-aspartate, 3-sulfino-L-alanine (cysteine sulfinic acid), and L-cysteate to beta-alanine, hypotaurine and taurine, respectively. The preferred substrate is 3-sulfino-L-alanine. Does not exhibit any decarboxylation activity toward glutamate. This is Cysteine sulfinic acid decarboxylase (CSAD) from Homo sapiens (Human).